A 279-amino-acid polypeptide reads, in one-letter code: Tetra-spanning protein 1 (279 aa).

Helical transmembrane passes span 25–45 (VWFS…LQAI) and 50–70 (APPF…AIVL). An N-linked (GlcNAc...) asparagine glycan is attached at N77. The helical transmembrane segment at 100-122 (YFILALSMLIDRPILFSLAPYAI) threads the bilayer. An N-linked (GlcNAc...) asparagine glycan is attached at N143. A helical transmembrane segment spans residues 172–192 (MQLVASLETFLLFRLFFGVFL). The interval 260–279 (VGTAQSRPTASSSTTAPSST) is disordered. The span at 262–279 (TAQSRPTASSSTTAPSST) shows a compositional bias: low complexity.

This sequence belongs to the PER33/POM33 family. In terms of assembly, interacts with RTN1 and YOP1.

The protein localises to the golgi apparatus membrane. The protein resides in the endoplasmic reticulum membrane. It localises to the nucleus membrane. Required for the correct positioning of the cellular division plane by delimiting the actomyosin ring assembly at the cell equator. In Schizosaccharomyces pombe (strain 972 / ATCC 24843) (Fission yeast), this protein is Tetra-spanning protein 1 (tts1).